We begin with the raw amino-acid sequence, 456 residues long: Sulfate adenylyltransferase (456 aa).

This sequence belongs to the sulfate adenylyltransferase family.

It catalyses the reaction sulfate + ATP + H(+) = adenosine 5'-phosphosulfate + diphosphate. Its pathway is sulfur metabolism; hydrogen sulfide biosynthesis; sulfite from sulfate: step 1/3. This chain is Sulfate adenylyltransferase (sat), found in Archaeoglobus fulgidus (strain ATCC 49558 / DSM 4304 / JCM 9628 / NBRC 100126 / VC-16).